Here is a 1412-residue protein sequence, read N- to C-terminus: DNA-directed RNA polymerase subunit beta' (1412 aa).

The Zn(2+) site is built by Cys-70, Cys-72, Cys-85, and Cys-88. Asp-460, Asp-462, and Asp-464 together coordinate Mg(2+). Residues Cys-819, Cys-893, Cys-900, and Cys-903 each contribute to the Zn(2+) site. The segment at 1393 to 1412 is disordered; the sequence is EAFEFGTPSAPAEEPQHPAE.

The protein belongs to the RNA polymerase beta' chain family. In terms of assembly, the RNAP catalytic core consists of 2 alpha, 1 beta, 1 beta' and 1 omega subunit. When a sigma factor is associated with the core the holoenzyme is formed, which can initiate transcription. Requires Mg(2+) as cofactor. Zn(2+) serves as cofactor.

It catalyses the reaction RNA(n) + a ribonucleoside 5'-triphosphate = RNA(n+1) + diphosphate. In terms of biological role, DNA-dependent RNA polymerase catalyzes the transcription of DNA into RNA using the four ribonucleoside triphosphates as substrates. This Burkholderia pseudomallei (strain 1106a) protein is DNA-directed RNA polymerase subunit beta'.